A 678-amino-acid chain; its full sequence is Chloride channel protein ClC-Kb (678 aa).

Over 1-50 the chain is Cytoplasmic; the sequence is MEELVGLREGSSGNPVALRELWSPCPRLRRGIRGGLEWLKQKLFRVGEDW. Helical transmembrane passes span 51–82 and 91–111; these read YFLMTLGVLMALISYAMNFALGRVVRAHKWLY and LRYLSWTVYPVALVSFSSGFS. The segment at residues 116 to 127 is an intramembrane region (helical); sequence PFSGGSGIPELK. Serine 121 contributes to the chloride binding site. The next 2 membrane-spanning stretches (helical) occupy residues 141 to 160 and 161 to 180; these read IKNFGAKVVGLSCTLATGST and LFLGKVGPFVHLSVMIAAYL. Positions 203–224 form an intramembrane region, helical; that stretch reads AGAAVGVATVFAAPFSGVLFCI. A helical transmembrane segment spans residues 236–255; that stretch reads YWRGFFAATCGAFMFRLLAV. Residues glutamate 259, glutamate 261, aspartate 278, and glutamate 281 each contribute to the Ca(2+) site. Helical transmembrane passes span 282–310 and 325–342; these read IFFFVLLGAICGVASCAYLYCQRTFLAFT and PLYAALAATVLASITYPP. The segment at residues 349–360 is an intramembrane region (helical); sequence ASRLSMREHLDT. Asparagine 364 is a glycosylation site (N-linked (GlcNAc...) asparagine). Helical transmembrane passes span 400–420 and 421–440; these read GTLAFFLVMKFWMLILATTIP and MPAGYFLPIFIIGAAIGRLL. Phenylalanine 426 serves as a coordination point for chloride. Positions 464 to 496 form an intramembrane region, helical; the sequence is GGYALAGAAAFSGAVTHSISTALLAFELTGQIV. Residues 500–520 traverse the membrane as a helical segment; it reads PVLMAVLAANAIAQSCQPSFY. Over 521 to 678 the chain is Cytoplasmic; it reads DGTIMVKKLP…SWVERQHTGF (158 aa). 2 CBS domains span residues 551–612 and 620–678; these read MRRA…ARAS and DILA…HTGF.

It belongs to the chloride channel (TC 2.A.49) family. CLCNKB subfamily. Homodimer. Interacts with BSND. Post-translationally, N-glycosylated. In terms of tissue distribution, expressed predominantly in the kidney.

It is found in the basolateral cell membrane. It carries out the reaction chloride(in) = chloride(out). It catalyses the reaction iodide(out) = iodide(in). The enzyme catalyses nitrate(in) = nitrate(out). The catalysed reaction is bromide(in) = bromide(out). Functionally, anion-selective channel permeable to small monovalent anions with ion selectivity for chloride &gt; bromide &gt; nitrate &gt; iodide. Forms a homodimeric channel where each subunit has its own ion conduction pathway. May conduct double-barreled currents controlled by two types of gates, two fast gates that control each subunit independently and a slow common gate that opens and shuts off both subunits simultaneously. Assembles with the regulatory subunit BSND/Barttin for sorting at the basolateral plasma membrane domain and functional switch to the ion conducting state. CLCNKB:BSND channels display mostly a linear current-voltage relationship controlled by common gate. Mediates chloride conductance along nephron segments, namely the thick ascending limb of Henle's loop, convoluted tubule and the collecting duct, contributing to the maintenance of systemic acid-base and electrolyte homeostasis. Conducts chloride currents in the stria vascularis of the inner ear to establish the endocochlear potential necessary for normal hearing. The chain is Chloride channel protein ClC-Kb (CLCNKB) from Oryctolagus cuniculus (Rabbit).